The chain runs to 427 residues: Enolase (427 aa).

Gln163 is a (2R)-2-phosphoglycerate binding site. Glu205 acts as the Proton donor in catalysis. Residues Asp242, Glu285, and Asp312 each coordinate Mg(2+). 4 residues coordinate (2R)-2-phosphoglycerate: Lys337, Arg366, Ser367, and Lys388. Lys337 (proton acceptor) is an active-site residue.

It belongs to the enolase family. Mg(2+) is required as a cofactor.

Its subcellular location is the cytoplasm. It localises to the secreted. The protein resides in the cell surface. The catalysed reaction is (2R)-2-phosphoglycerate = phosphoenolpyruvate + H2O. It functions in the pathway carbohydrate degradation; glycolysis; pyruvate from D-glyceraldehyde 3-phosphate: step 4/5. Its function is as follows. Catalyzes the reversible conversion of 2-phosphoglycerate (2-PG) into phosphoenolpyruvate (PEP). It is essential for the degradation of carbohydrates via glycolysis. The polypeptide is Enolase (Laribacter hongkongensis (strain HLHK9)).